Here is a 506-residue protein sequence, read N- to C-terminus: Histidine ammonia-lyase (506 aa).

Residues 144-146 (ASG) constitute a cross-link (5-imidazolinone (Ala-Gly)). A 2,3-didehydroalanine (Ser) modification is found at Ser-145.

Belongs to the PAL/histidase family. Post-translationally, contains an active site 4-methylidene-imidazol-5-one (MIO), which is formed autocatalytically by cyclization and dehydration of residues Ala-Ser-Gly.

It localises to the cytoplasm. It catalyses the reaction L-histidine = trans-urocanate + NH4(+). It participates in amino-acid degradation; L-histidine degradation into L-glutamate; N-formimidoyl-L-glutamate from L-histidine: step 1/3. The chain is Histidine ammonia-lyase from Legionella pneumophila (strain Paris).